Here is a 463-residue protein sequence, read N- to C-terminus: L-seryl-tRNA(Sec) selenium transferase (463 aa).

Lys295 is modified (N6-(pyridoxal phosphate)lysine).

This sequence belongs to the SelA family. Homodecamer; pentamer of dimers. Binds only one seryl-tRNA(Sec) per dimer. It depends on pyridoxal 5'-phosphate as a cofactor.

Its subcellular location is the cytoplasm. It catalyses the reaction L-seryl-tRNA(Sec) + selenophosphate + H(+) = L-selenocysteinyl-tRNA(Sec) + phosphate. It functions in the pathway aminoacyl-tRNA biosynthesis; selenocysteinyl-tRNA(Sec) biosynthesis; selenocysteinyl-tRNA(Sec) from L-seryl-tRNA(Sec) (bacterial route): step 1/1. Functionally, converts seryl-tRNA(Sec) to selenocysteinyl-tRNA(Sec) required for selenoprotein biosynthesis. This Salmonella typhimurium (strain LT2 / SGSC1412 / ATCC 700720) protein is L-seryl-tRNA(Sec) selenium transferase.